Here is a 121-residue protein sequence, read N- to C-terminus: uncharacterized protein (121 aa).

This sequence to M.jannaschii MJ0017 and MJ1466.

This is an uncharacterized protein from Aquifex aeolicus (strain VF5).